Here is a 200-residue protein sequence, read N- to C-terminus: UPF0301 protein Veis_1517 (200 aa).

The protein belongs to the UPF0301 (AlgH) family.

This Verminephrobacter eiseniae (strain EF01-2) protein is UPF0301 protein Veis_1517.